Here is a 210-residue protein sequence, read N- to C-terminus: ATP-dependent Clp protease proteolytic subunit (210 aa).

Residue serine 107 is the Nucleophile of the active site. Histidine 132 is a catalytic residue.

Belongs to the peptidase S14 family. In terms of assembly, fourteen ClpP subunits assemble into 2 heptameric rings which stack back to back to give a disk-like structure with a central cavity, resembling the structure of eukaryotic proteasomes.

The protein localises to the cytoplasm. It catalyses the reaction Hydrolysis of proteins to small peptides in the presence of ATP and magnesium. alpha-casein is the usual test substrate. In the absence of ATP, only oligopeptides shorter than five residues are hydrolyzed (such as succinyl-Leu-Tyr-|-NHMec, and Leu-Tyr-Leu-|-Tyr-Trp, in which cleavage of the -Tyr-|-Leu- and -Tyr-|-Trp bonds also occurs).. In terms of biological role, cleaves peptides in various proteins in a process that requires ATP hydrolysis. Has a chymotrypsin-like activity. Plays a major role in the degradation of misfolded proteins. The sequence is that of ATP-dependent Clp protease proteolytic subunit from Zymomonas mobilis subsp. mobilis (strain ATCC 31821 / ZM4 / CP4).